The following is an 82-amino-acid chain: Turripeptide Lol6.1 (82 aa).

An N-terminal signal peptide occupies residues 1 to 23; sequence MRFHWIPTLTVLLVLSMSFGTEA. The propeptide occupies 24 to 48; it reads IPXXXXXXXXXXXXXXXXXXXXXXX. 3 disulfides stabilise this stretch: C54–C66, C58–C71, and C65–C77.

Expressed by the venom duct.

The protein resides in the secreted. In terms of biological role, acts as a neurotoxin by inhibiting an ion channel. The chain is Turripeptide Lol6.1 from Iotyrris olangoensis (Sea snail).